Here is a 149-residue protein sequence, read N- to C-terminus: Protein K7 (149 aa).

The protein belongs to the orthopoxvirus OPG044 family. Interacts with DDX3; this interaction inhibits DDX3 and suppresses DDX3-mediated IFN-beta promoter induction. Interacts with TRAF6 and IRAK2; these interactions suppress TLR-dependent NF-KappaB activation.

The protein resides in the host cytoplasm. Virulence factor that affects the acute immune response to infection. Bcl-2-like protein which, through its interaction with the DEAD box RNA helicase DDX3X/DDX3, prevents TBK1/IKKepsilon-mediated IRF3 activation. Contributes to virulence by binding to the host TRAF6 and IRAK2 and preventing host NF-kappa-B activation. This is Protein K7 (OPG044) from Homo sapiens (Human).